The primary structure comprises 54 residues: Conotoxin mr5.4b (54 aa).

Residues 1–14 form the signal peptide; it reads ILLLLIASAPSVDA. Positions 15 to 40 are excised as a propeptide; it reads QLKTKDDVPLASFHANVKRTLQKLLN. Position 52 is a 4-carboxyglutamate (glutamate 52).

The protein belongs to the conotoxin T superfamily. Contains 2 disulfide bonds that can be either 'C1-C3, C2-C4' or 'C1-C4, C2-C3', since these disulfide connectivities have been observed for conotoxins with cysteine framework V (for examples, see AC P0DQQ7 and AC P81755). In terms of tissue distribution, expressed by the venom duct.

The protein localises to the secreted. The chain is Conotoxin mr5.4b from Conus marmoreus (Marble cone).